Consider the following 139-residue polypeptide: ATP synthase epsilon chain (139 aa).

The protein belongs to the ATPase epsilon chain family. F-type ATPases have 2 components, CF(1) - the catalytic core - and CF(0) - the membrane proton channel. CF(1) has five subunits: alpha(3), beta(3), gamma(1), delta(1), epsilon(1). CF(0) has three main subunits: a, b and c.

It is found in the cell inner membrane. Produces ATP from ADP in the presence of a proton gradient across the membrane. This chain is ATP synthase epsilon chain, found in Acinetobacter baylyi (strain ATCC 33305 / BD413 / ADP1).